A 272-amino-acid chain; its full sequence is FAS1 domain-containing protein YDR262W (272 aa).

The signal sequence occupies residues 1–26 (MIFNLPVSVLLYFSLIWAMEPSFVRG). The 170-residue stretch at 100 to 269 (PLSLESKLSL…GVILMVDFTL (170 aa)) folds into the FAS1 domain.

The protein resides in the vacuole. This Saccharomyces cerevisiae (strain ATCC 204508 / S288c) (Baker's yeast) protein is FAS1 domain-containing protein YDR262W.